The primary structure comprises 868 residues: Alanine--tRNA ligase (868 aa).

Residues His553, His557, Cys657, and His661 each contribute to the Zn(2+) site. The segment at 831-851 is disordered; the sequence is GGKGGGRADMAQAGGSRPQAL.

This sequence belongs to the class-II aminoacyl-tRNA synthetase family. Zn(2+) serves as cofactor.

Its subcellular location is the cytoplasm. The catalysed reaction is tRNA(Ala) + L-alanine + ATP = L-alanyl-tRNA(Ala) + AMP + diphosphate. Functionally, catalyzes the attachment of alanine to tRNA(Ala) in a two-step reaction: alanine is first activated by ATP to form Ala-AMP and then transferred to the acceptor end of tRNA(Ala). Also edits incorrectly charged Ser-tRNA(Ala) and Gly-tRNA(Ala) via its editing domain. This is Alanine--tRNA ligase from Chromohalobacter salexigens (strain ATCC BAA-138 / DSM 3043 / CIP 106854 / NCIMB 13768 / 1H11).